We begin with the raw amino-acid sequence, 621 residues long: MFRMDSSGRRSRSRRSRGSSGAPNMFEGTTTSRSRQEQLLASLEQMRGSSGPSNTEGTTSRAADLVAPTMAPTAEAAVDAEAAVDAEAEEAAAELDDGEETSGADASTEEAATQAPPRRAIRYRRSLTLKPSKPFDQRRVIEPKGTRAWKEVSWDGTGHRTPILTELGICLRFAYPAMVTEGGQEIAAHYWAHWDLKPYGNDGTHTSKVWDLFWGQFRVCDPYTLDDSYVREVFNGSADRAVKGMMYKARLRAVTVYQKRQGNYCDANMAKEIHLTAQQYKESEVDWLSHHSDAWAWMCEYWASEEFLAISNRNRMNRLSKPGVHFFGADGHVGKAARMAARNGVEPTLLQVFVEGHKGPDPNHPEILNDSNATEKLARYIDNVREKNGPDTDWLTGEFDTEAAYKAGGGVPHGRLAIGDGVVPRRSYTRRSNFSAGSNRPRRPSAREGELLEKMTQMEESMAQYKQQVQQQMQQMQNWMLHQMYGGAGTQFGMPPFQQPPIITHPVSGQSSDRSTAAADGSQGSATSVQDQLMPLGVIGGQMMPWAPRQPGIWPPMQTQMPPPMPWGFPPRGQSQSPGLPSHSPGSGSGSHHASPPPDQSTFMDLLMNTSGGGSNDPPTE.

4 disordered regions span residues 1 to 119 (MFRM…PPRR), 428 to 447 (YTRR…PSAR), 498 to 530 (QQPP…TSVQ), and 549 to 621 (RQPG…PPTE). 2 stretches are compositionally biased toward polar residues: residues 27 to 39 (EGTT…QEQL) and 47 to 61 (RGSS…TTSR). Residues 82-102 (AAVDAEAEEAAAELDDGEETS) show a composition bias toward acidic residues. Residues 570–594 (PPRGQSQSPGLPSHSPGSGSGSHHA) show a composition bias toward low complexity.

In terms of biological role, this protein has most probably three functions; the mutator (M) function, for excision and transposition; the suppressor (S) function, which inhibits residual gene activity of certain alleles in which inhibitor elements are integrated; an activator (A) function is proposed, because inactive SPM can be activated by a second SPM. The chain is Autonomous transposable element EN-1 mosaic protein from Zea mays (Maize).